Reading from the N-terminus, the 679-residue chain is Methyl-accepting chemotaxis protein McpB (679 aa).

Divergent domain HAMP stretches follow at residues 8–56, 63–112, and 111–156; these read AVAQ…RQLR, QQVE…AAHI, and HIAV…ERLR. Positions 171-213 constitute a PAS domain; sequence YNARIKSALDNVSANVMIADNDLNIIYMNRTVSEMLGRAEADI. His-234 contributes to the heme binding site. A DxT. Important for signal propagation motif is present at residues 285 to 287; sequence DRT. Residues 289 to 332 are divergent domain HAMP 4; sequence EHRAEQEVSQLVQAAAAGDFSKRVEEAGKEGFFLRLAKDLNSLV. Positions 333-385 constitute an HAMP 5 domain; it reads DTADRGLRDVSRMLGALAQGDLTQRIEADYQGTFGQLKDFSNDTAQSLSRMLG. One can recognise a Methyl-accepting transducer domain in the interval 390 to 619; the sequence is AADTINTAAS…EAAAAAEAMQ (230 aa). Disordered stretches follow at residues 405-425 and 644-679; these read NAELSARTEQQASSLEETASS and ASARPSAPRPSAPAPLARSGMARASKARKEDGWEEF. The segment covering 411–425 has biased composition (polar residues); it reads RTEQQASSLEETASS. Residues 670–679 show a composition bias toward basic and acidic residues; sequence ARKEDGWEEF. Residues 675–679 carry the GWEEF pentapeptide. Important for methylation by CheR2 motif; that stretch reads GWEEF.

It belongs to the methyl-accepting chemotaxis (MCP) protein family. As to quaternary structure, homodimer. The PAS domains form dimers in the presence and absence of oxygen. Interacts with the methyltransferase CheR2 via the C-terminal McpB pentapeptide GWEEF. Interacts with the methylesterase/gutaminase CheB2, which also binds to the GWEEF pentapeptide. Post-translationally, methylated by CheR2, but not by CheR1, CheR3 or WspC. Demethylated by CheB2. In vitro, can be methylated by E.coli CheR.

The protein resides in the cytoplasm. Functionally, chemoreceptor that plays a critical role in the virulence and pathogenesis of P.aeruginosa in a variety of hosts. Probably acts through oxygen sensing. Uses a heme-based sensor. Could be involved in chemotaxis. When expressed in E.coli, is able to sense and mediate repellent responses to oxygen, carbon monoxide and nitric oxide. This is Methyl-accepting chemotaxis protein McpB from Pseudomonas aeruginosa (strain ATCC 15692 / DSM 22644 / CIP 104116 / JCM 14847 / LMG 12228 / 1C / PRS 101 / PAO1).